The primary structure comprises 163 residues: Single-stranded DNA-binding protein 2 (163 aa).

In terms of domain architecture, SSB spans Met1 to Glu104. The disordered stretch occupies residues Arg109–Phe163. A compositionally biased stretch (low complexity) spans Gly119–Ser130. Residues Tyr131 to Asn140 are compositionally biased toward polar residues. Positions Asp158–Phe163 match the Important for interaction with partner proteins motif.

Homotetramer.

Plays an important role in DNA replication, recombination and repair. Binds to ssDNA and to an array of partner proteins to recruit them to their sites of action during DNA metabolism. This Streptococcus pyogenes serotype M6 (strain ATCC BAA-946 / MGAS10394) protein is Single-stranded DNA-binding protein 2 (ssb2).